We begin with the raw amino-acid sequence, 503 residues long: Protein FAM124A (503 aa).

The segment at 434–470 (LAQSDTVPGRQNHSSDSLHSVSDISSSPCPVFPSTPA) is disordered. Residues 436 to 445 (QSDTVPGRQN) show a composition bias toward polar residues. Residues 447 to 460 (SSDSLHSVSDISSS) show a composition bias toward low complexity.

This sequence belongs to the FAM124 family.

The polypeptide is Protein FAM124A (fam124a) (Xenopus tropicalis (Western clawed frog)).